The sequence spans 223 residues: Transmembrane protein 126 (223 aa).

Over 1–39 (MALSRAKPDELPRDAVVITEDQALKYQWKIITSWDKIGE) the chain is Mitochondrial matrix. The chain crosses the membrane as a helical span at residues 40-62 (VWSLRYTPGILSALAAGTGAYIN). Over 63-78 (NHYRTKLRLGGHGRLS) the chain is Mitochondrial intermembrane. The chain crosses the membrane as a helical span at residues 79-99 (TYLPIVAVPAIFTMLAHKFFI). Over 100 to 123 (QRPILLNPLGECPVCIQMRSAAFQ) the chain is Mitochondrial matrix. Residues 124–144 (TSLGIVYPTILAPFAAFLFAT) form a helical membrane-spanning segment. Topologically, residues 145–171 (RCYTYRIPSITENPREVFLLWRKFTRP) are mitochondrial intermembrane. Residues 172–192 (IVPALGTLIGLQALLTMFLTG) traverse the membrane as a helical segment. Residues 193-223 (QEDKQNFKLMLRMREIEHQVEEEHLPQRMDF) lie on the Mitochondrial matrix side of the membrane.

It belongs to the TMEM126 family. As to quaternary structure, associates with mitochondrial complex I assembly intermediates during its biogenesis.

Its subcellular location is the mitochondrion membrane. As part of the MCIA complex, involved in the assembly of the mitochondrial complex I. This chain is Transmembrane protein 126, found in Drosophila melanogaster (Fruit fly).